The primary structure comprises 309 residues: THO complex subunit Tho3 (309 aa).

6 WD repeats span residues 22 to 61 (GQQG…FKFT), 65 to 107 (GNRG…PIAE), 109 to 148 (ESNY…IMET), 192 to 231 (AHNS…CERS), 234 to 273 (RMDY…QIWK), and 275 to 309 (PTNG…IFGL).

It belongs to the THOC3 family. In terms of assembly, component of the transcription/export (TREX) complex, which is at least is formed of SUB2, TEX1 and YRA1 and the THO complex composed of HPR1, MFT1, THO2 and THP1.

It is found in the nucleus. Its function is as follows. Component of the TREX complex, which operates in coupling transcription elongation to mRNA export. This is THO complex subunit Tho3 (THO3) from Schizosaccharomyces pombe (strain 972 / ATCC 24843) (Fission yeast).